The following is a 377-amino-acid chain: Glutamate 5-kinase (377 aa).

Lys15 is an ATP binding site. Residues Ser56, Asp143, and Asn155 each contribute to the substrate site. 175 to 176 (SD) lines the ATP pocket. The region spanning 281–358 (KGTLTIDAGA…PDVLIILGIS (78 aa)) is the PUA domain.

Belongs to the glutamate 5-kinase family.

It is found in the cytoplasm. It carries out the reaction L-glutamate + ATP = L-glutamyl 5-phosphate + ADP. It functions in the pathway amino-acid biosynthesis; L-proline biosynthesis; L-glutamate 5-semialdehyde from L-glutamate: step 1/2. Functionally, catalyzes the transfer of a phosphate group to glutamate to form L-glutamate 5-phosphate. In Rhodopseudomonas palustris (strain BisA53), this protein is Glutamate 5-kinase.